A 330-amino-acid polypeptide reads, in one-letter code: Glycerol-3-phosphate dehydrogenase [NAD(P)+] (330 aa).

Ser11, Phe12, Arg32, and Lys106 together coordinate NADPH. The sn-glycerol 3-phosphate site is built by Lys106, Gly133, and Ser135. Ala137 lines the NADPH pocket. Positions 188, 241, 251, 252, and 253 each coordinate sn-glycerol 3-phosphate. Residue Lys188 is the Proton acceptor of the active site. Position 252 (Arg252) interacts with NADPH. Positions 276 and 278 each coordinate NADPH.

The protein belongs to the NAD-dependent glycerol-3-phosphate dehydrogenase family.

The protein localises to the cytoplasm. The enzyme catalyses sn-glycerol 3-phosphate + NAD(+) = dihydroxyacetone phosphate + NADH + H(+). It carries out the reaction sn-glycerol 3-phosphate + NADP(+) = dihydroxyacetone phosphate + NADPH + H(+). The protein operates within membrane lipid metabolism; glycerophospholipid metabolism. Functionally, catalyzes the reduction of the glycolytic intermediate dihydroxyacetone phosphate (DHAP) to sn-glycerol 3-phosphate (G3P), the key precursor for phospholipid synthesis. The chain is Glycerol-3-phosphate dehydrogenase [NAD(P)+] from Clostridium botulinum (strain Alaska E43 / Type E3).